Here is a 297-residue protein sequence, read N- to C-terminus: Nucleotide-binding protein DSY4845 (297 aa).

Position 13 to 20 (13 to 20) interacts with ATP; the sequence is GLSGAGKT. Position 64-67 (64-67) interacts with GTP; that stretch reads DLRG.

The protein belongs to the RapZ-like family.

Displays ATPase and GTPase activities. This is Nucleotide-binding protein DSY4845 from Desulfitobacterium hafniense (strain Y51).